The following is a 552-amino-acid chain: 5'-AMP-activated protein kinase catalytic subunit alpha-2 (552 aa).

Positions 16–268 constitute a Protein kinase domain; it reads YVLGDTLGVG…IKDIREHEWF (253 aa). Residues 22-30 and Lys-45 contribute to the ATP site; that span reads LGVGTFGKV. Asp-139 (proton acceptor) is an active-site residue. Residue Thr-172 is modified to Phosphothreonine; by LKB1 and CaMKK2. Residue Thr-258 is modified to Phosphothreonine. The tract at residues 291-376 is AIS; it reads EAVKEVCEKF…PERMPPLIAD (86 aa). A Phosphoserine modification is found at Ser-377. The disordered stretch occupies residues 478–520; that stretch reads EQRSGSSTPQRSCSAAGLHRPRSSVDSSTAENHSLSGSLTGSL. Polar residues predominate over residues 480–490; sequence RSGSSTPQRSC. Ser-491 is modified (phosphoserine). Over residues 501–510 the composition is skewed to polar residues; that stretch reads SVDSSTAENH. Positions 511–520 are enriched in low complexity; the sequence is SLSGSLTGSL.

This sequence belongs to the protein kinase superfamily. CAMK Ser/Thr protein kinase family. SNF1 subfamily. AMPK is a heterotrimer of an alpha catalytic subunit (PRKAA1 or PRKAA2), a beta (PRKAB1 or PRKAB2) and a gamma non-catalytic subunits (PRKAG1, PRKAG2 or PRKAG3). Interacts with FNIP1 and FNIP2. Associates with internalized INSR complexes on Golgi/endosomal membranes; PRKAA2/AMPK2 together with ATIC and HACD3/PTPLAD1 is proposed to be part of a signaling network regulating INSR autophosphorylation and endocytosis. Interacts with DUSP29. Interacts with ARF6. The phosphorylated form at Thr-172 mediated by CamKK2 interacts with ACSS2. Mg(2+) is required as a cofactor. Post-translationally, ubiquitinated. In terms of processing, phosphorylated at Thr-172 by STK11/LKB1 in complex with STE20-related adapter-alpha (STRADA) pseudo kinase and CAB39. Also phosphorylated at Thr-172 by CAMKK2; triggered by a rise in intracellular calcium ions, without detectable changes in the AMP/ATP ratio. CAMKK1 can also phosphorylate Thr-172, but at much lower level. Dephosphorylated by protein phosphatase 2A and 2C (PP2A and PP2C). Phosphorylated by ULK1; leading to negatively regulate AMPK activity and suggesting the existence of a regulatory feedback loop between ULK1 and AMPK. Dephosphorylated by PPM1A and PPM1B at Thr-172 (mediated by STK11/LKB1). Skeletal muscle, lower levels in liver, heart and kidney.

The protein resides in the cytoplasm. The protein localises to the nucleus. It catalyses the reaction L-seryl-[protein] + ATP = O-phospho-L-seryl-[protein] + ADP + H(+). The enzyme catalyses L-threonyl-[protein] + ATP = O-phospho-L-threonyl-[protein] + ADP + H(+). The catalysed reaction is L-seryl-[acetyl-CoA carboxylase] + ATP = O-phospho-L-seryl-[acetyl-CoA carboxylase] + ADP + H(+). It carries out the reaction L-seryl-[3-hydroxy-3-methylglutaryl-coenzyme A reductase] + ATP = O-phospho-L-seryl-[3-hydroxy-3-methylglutaryl-coenzyme A reductase] + ADP + H(+). With respect to regulation, activated by phosphorylation on Thr-172. Binding of AMP to non-catalytic gamma subunit (PRKAG1, PRKAG2 or PRKAG3) results in allosteric activation, inducing phosphorylation on Thr-172. AMP-binding to gamma subunit also sustains activity by preventing dephosphorylation of Thr-172. ADP also stimulates Thr-172 phosphorylation, without stimulating already phosphorylated AMPK. ATP promotes dephosphorylation of Thr-172, rendering the enzyme inactive. Under physiological conditions AMPK mainly exists in its inactive form in complex with ATP, which is much more abundant than AMP. Selectively inhibited by compound C (6-[4-(2-Piperidin-1-yl-ethoxy)-phenyl)]-3-pyridin-4-yl-pyyrazolo[1,5-a] pyrimidine. Activated by resveratrol, a natural polyphenol present in red wine, and S17834, a synthetic polyphenol. Salicylate/aspirin directly activates kinase activity, primarily by inhibiting Thr-172 dephosphorylation. Functionally, catalytic subunit of AMP-activated protein kinase (AMPK), an energy sensor protein kinase that plays a key role in regulating cellular energy metabolism. In response to reduction of intracellular ATP levels, AMPK activates energy-producing pathways and inhibits energy-consuming processes: inhibits protein, carbohydrate and lipid biosynthesis, as well as cell growth and proliferation. AMPK acts via direct phosphorylation of metabolic enzymes, and by longer-term effects via phosphorylation of transcription regulators. Regulates lipid synthesis by phosphorylating and inactivating lipid metabolic enzymes such as ACACA, ACACB, GYS1, HMGCR and LIPE; regulates fatty acid and cholesterol synthesis by phosphorylating acetyl-CoA carboxylase (ACACA and ACACB) and hormone-sensitive lipase (LIPE) enzymes, respectively. Promotes lipolysis of lipid droplets by mediating phosphorylation of isoform 1 of CHKA (CHKalpha2). Regulates insulin-signaling and glycolysis by phosphorylating IRS1, PFKFB2 and PFKFB3. Involved in insulin receptor/INSR internalization. AMPK stimulates glucose uptake in muscle by increasing the translocation of the glucose transporter SLC2A4/GLUT4 to the plasma membrane, possibly by mediating phosphorylation of TBC1D4/AS160. Regulates transcription and chromatin structure by phosphorylating transcription regulators involved in energy metabolism such as CRTC2/TORC2, FOXO3, histone H2B, HDAC5, MEF2C, MLXIPL/ChREBP, EP300, HNF4A, p53/TP53, SREBF1, SREBF2 and PPARGC1A. Acts as a key regulator of glucose homeostasis in liver by phosphorylating CRTC2/TORC2, leading to CRTC2/TORC2 sequestration in the cytoplasm. In response to stress, phosphorylates 'Ser-36' of histone H2B (H2BS36ph), leading to promote transcription. Acts as a key regulator of cell growth and proliferation by phosphorylating FNIP1, TSC2, RPTOR, WDR24 and ATG1/ULK1: in response to nutrient limitation, negatively regulates the mTORC1 complex by phosphorylating RPTOR component of the mTORC1 complex and by phosphorylating and activating TSC2. Also phosphorylates and inhibits GATOR2 subunit WDR24 in response to nutrient limitation, leading to suppress glucose-mediated mTORC1 activation. In response to energetic stress, phosphorylates FNIP1, inactivating the non-canonical mTORC1 signaling, thereby promoting nuclear translocation of TFEB and TFE3, and inducing transcription of lysosomal or autophagy genes. In response to nutrient limitation, promotes autophagy by phosphorylating and activating ATG1/ULK1. In that process, it also activates WDR45/WIPI4. Phosphorylates CASP6, thereby preventing its autoprocessing and subsequent activation. AMPK also acts as a regulator of circadian rhythm by mediating phosphorylation of CRY1, leading to destabilize it. May regulate the Wnt signaling pathway by phosphorylating CTNNB1, leading to stabilize it. Also acts as a regulator of cellular polarity by remodeling the actin cytoskeleton; probably by indirectly activating myosin. Also phosphorylates CFTR, EEF2K, KLC1, NOS3 and SLC12A1. Plays an important role in the differential regulation of pro-autophagy (composed of PIK3C3, BECN1, PIK3R4 and UVRAG or ATG14) and non-autophagy (composed of PIK3C3, BECN1 and PIK3R4) complexes, in response to glucose starvation. Can inhibit the non-autophagy complex by phosphorylating PIK3C3 and can activate the pro-autophagy complex by phosphorylating BECN1. Upon glucose starvation, promotes ARF6 activation in a kinase-independent manner leading to cell migration. Upon glucose deprivation mediates the phosphorylation of ACSS2 at 'Ser-659', which exposes the nuclear localization signal of ACSS2, required for its interaction with KPNA1 and nuclear translocation. Upon stress, regulates mitochondrial fragmentation through phosphorylation of MTFR1L. This chain is 5'-AMP-activated protein kinase catalytic subunit alpha-2 (Prkaa2), found in Rattus norvegicus (Rat).